The sequence spans 195 residues: ATP-dependent Clp protease proteolytic subunit (195 aa).

The active-site Nucleophile is serine 98. Histidine 123 is an active-site residue.

This sequence belongs to the peptidase S14 family. In terms of assembly, fourteen ClpP subunits assemble into 2 heptameric rings which stack back to back to give a disk-like structure with a central cavity, resembling the structure of eukaryotic proteasomes.

The protein resides in the cytoplasm. The catalysed reaction is Hydrolysis of proteins to small peptides in the presence of ATP and magnesium. alpha-casein is the usual test substrate. In the absence of ATP, only oligopeptides shorter than five residues are hydrolyzed (such as succinyl-Leu-Tyr-|-NHMec, and Leu-Tyr-Leu-|-Tyr-Trp, in which cleavage of the -Tyr-|-Leu- and -Tyr-|-Trp bonds also occurs).. Cleaves peptides in various proteins in a process that requires ATP hydrolysis. Has a chymotrypsin-like activity. Plays a major role in the degradation of misfolded proteins. The protein is ATP-dependent Clp protease proteolytic subunit of Alkaliphilus oremlandii (strain OhILAs) (Clostridium oremlandii (strain OhILAs)).